Here is a 482-residue protein sequence, read N- to C-terminus: MFS-type transporter cnsL (482 aa).

The helical transmembrane segment at 73 to 93 (LFVCATLSGLDKTAISAAAVY) threads the bilayer. Asn-100 carries N-linked (GlcNAc...) asparagine glycosylation. Helical transmembrane passes span 108–128 (WIGSAPFFGGLLFMGPLAYCL), 131–151 (VPAVPFFAFNVLCWGILEMSV), 170–190 (IILNVVAPIINGFVAWVVGYY), 199–219 (IIFLLVGALTIVTSVVVYFVL), 304–324 (LLAMPPGAMSTLSGIGLSYLA), 333–353 (AIVTVSILLPLFGAVLCYALP), 361–381 (LVGLYILYTYWAPYVTLVSVY), 392–412 (ITLYAWFYIAWATGNIIGPQT), and 426–446 (VAMIICYVVAMFAITAYGVVC).

This sequence belongs to the major facilitator superfamily. Allantoate permease family.

It localises to the cell membrane. In terms of biological role, MFS-type transporter; part of the gene cluster that mediates the biosynthesis of communesins, a prominent class of indole alkaloids with great potential as pharmaceuticals. With the MFS transporter cnsO, is most likely responsible for cummunesins secretion and thereby may contribute to intrinsic resistance. This is MFS-type transporter cnsL from Penicillium expansum (Blue mold rot fungus).